We begin with the raw amino-acid sequence, 295 residues long: Ribosomal RNA small subunit methyltransferase A (295 aa).

Residues asparagine 29, leucine 31, glycine 56, glutamate 77, aspartate 102, and asparagine 127 each contribute to the S-adenosyl-L-methionine site.

It belongs to the class I-like SAM-binding methyltransferase superfamily. rRNA adenine N(6)-methyltransferase family. RsmA subfamily.

It is found in the cytoplasm. The catalysed reaction is adenosine(1518)/adenosine(1519) in 16S rRNA + 4 S-adenosyl-L-methionine = N(6)-dimethyladenosine(1518)/N(6)-dimethyladenosine(1519) in 16S rRNA + 4 S-adenosyl-L-homocysteine + 4 H(+). Functionally, specifically dimethylates two adjacent adenosines (A1518 and A1519) in the loop of a conserved hairpin near the 3'-end of 16S rRNA in the 30S particle. May play a critical role in biogenesis of 30S subunits. This chain is Ribosomal RNA small subunit methyltransferase A, found in Anoxybacillus flavithermus (strain DSM 21510 / WK1).